The sequence spans 211 residues: Probable metallo-hydrolase YqgX (211 aa).

Residues His54, His56, Asp58, His59, His130, Asp149, and His190 each contribute to the Zn(2+) site.

It belongs to the metallo-beta-lactamase superfamily. Glyoxalase II family. Requires Zn(2+) as cofactor.

In Bacillus subtilis (strain 168), this protein is Probable metallo-hydrolase YqgX (yqgX).